The sequence spans 72 residues: U10-myrmicitoxin-Tb1a (72 aa).

A signal peptide spans 1–26; that stretch reads MRVSYLSLTLTIVVVIAIIYAPETEA. A propeptide spanning residues 27 to 36 is cleaved from the precursor; that stretch reads KAWADADAEA.

It belongs to the formicidae venom precursor-01 superfamily. In terms of tissue distribution, expressed by the venom gland.

The protein localises to the secreted. In vivo, this neurotoxin paralyzes about 40% of blowflies (L.caesar) one hour after intrathoracic injection, when tested at high doses (28 nmol/g). This chain is U10-myrmicitoxin-Tb1a, found in Tetramorium bicarinatum (Tramp ant).